The following is a 165-amino-acid chain: Protein phosphatase 1 regulatory subunit 14C (165 aa).

Residues 1 to 12 (MSVATGSSETAG) are compositionally biased toward low complexity. A disordered region spans residues 1 to 73 (MSVATGSSET…QRRHQQGKVT (73 aa)). Ser2 bears the N-acetylserine mark. Ser25 is modified (phosphoserine). Arg27 carries the omega-N-methylarginine modification. A Phosphoserine modification is found at Ser33. Positions 35 to 63 (GSSSGSGSSREDSAPVATAAAAGQVQQQQ) are enriched in low complexity. Thr73 carries the post-translational modification Phosphothreonine; by ILK1.

It belongs to the PP1 inhibitor family. Post-translationally, has over 600-fold higher inhibitory activity when phosphorylated, creating a molecular switch for regulating the phosphorylation status of PPP1CA substrates and smooth muscle contraction. The main inhibitory site appears to be Thr-73. As to expression, detected in breast cancer.

The protein resides in the cytoplasm. It is found in the membrane. Inhibitor of the PP1 regulatory subunit PPP1CA. In Homo sapiens (Human), this protein is Protein phosphatase 1 regulatory subunit 14C (PPP1R14C).